The primary structure comprises 371 residues: MAAKTKKAIVDSKKQFDAIKKQFETFQILNEKGEVVNEAAMPDLTDDQLKELMRRMVFTRVLDQRSISLNRQGRLGFYAPTAGQEASQIATHFALEKEDFVLPGYRDVPQLIWHGLPLYQAFLFSRGHFRGNQMPDDVNALSPQIIIGAQYIQTAGVALGLKKRGKKAVAITYTGDGGASQGDFYEGINFAGAYKAPAIFVVQNNRYAISTPVEKQSAAETIAQKAVAAGIVGVQVDGMDPLAVYAATAEARERAINGEGPTLIETLTFRYGPHTMAGDDPTKYRTKEIENEWEQKDPLVRFRAFLENKGLWSEEEEAKVIEDAKEEIKQAIKKADAEPKQKVTDLMKIMYEKMPHNLEEQFEIYTQKESK.

Heterodimer of an alpha and a beta chain. Requires thiamine diphosphate as cofactor.

The enzyme catalyses N(6)-[(R)-lipoyl]-L-lysyl-[protein] + pyruvate + H(+) = N(6)-[(R)-S(8)-acetyldihydrolipoyl]-L-lysyl-[protein] + CO2. Activity of the E1 module is inhibited by the pyruvate dehydrogenase inhibitor PdhI. In terms of biological role, the pyruvate dehydrogenase complex catalyzes the overall conversion of pyruvate to acetyl-CoA and CO(2). It contains multiple copies of three enzymatic components: pyruvate dehydrogenase (E1), dihydrolipoamide acetyltransferase (E2) and lipoamide dehydrogenase (E3). Its function is as follows. The B.subtilis PDH complex also possesses branched-chain 2-oxoacid dehydrogenase (BCDH) activity. In Bacillus subtilis (strain 168), this protein is Pyruvate dehydrogenase E1 component subunit alpha.